Here is a 267-residue protein sequence, read N- to C-terminus: Sulfur carrier protein FdhD (267 aa).

C108 serves as the catalytic Cysteine persulfide intermediate.

Belongs to the FdhD family.

Its subcellular location is the cytoplasm. Its function is as follows. Required for formate dehydrogenase (FDH) activity. Acts as a sulfur carrier protein that transfers sulfur from IscS to the molybdenum cofactor prior to its insertion into FDH. The sequence is that of Sulfur carrier protein FdhD from Shouchella clausii (strain KSM-K16) (Alkalihalobacillus clausii).